The chain runs to 158 residues: Transcription elongation factor GreA (158 aa).

Residues 3–75 (TEKTYPMTQE…TQLENMIRNA (73 aa)) are a coiled coil.

The protein belongs to the GreA/GreB family.

In terms of biological role, necessary for efficient RNA polymerase transcription elongation past template-encoded arresting sites. The arresting sites in DNA have the property of trapping a certain fraction of elongating RNA polymerases that pass through, resulting in locked ternary complexes. Cleavage of the nascent transcript by cleavage factors such as GreA or GreB allows the resumption of elongation from the new 3'terminus. GreA releases sequences of 2 to 3 nucleotides. This is Transcription elongation factor GreA from Bacillus cereus (strain ATCC 14579 / DSM 31 / CCUG 7414 / JCM 2152 / NBRC 15305 / NCIMB 9373 / NCTC 2599 / NRRL B-3711).